Here is a 627-residue protein sequence, read N- to C-terminus: Transketolase-like protein 2 (627 aa).

Residue histidine 39 participates in substrate binding. Thiamine diphosphate-binding positions include serine 42, histidine 79, and 125 to 127 (GSL). Aspartate 157 contributes to the Mg(2+) binding site. 2 residues coordinate thiamine diphosphate: glycine 158 and asparagine 187. Positions 187 and 189 each coordinate Mg(2+). Lysine 249 and histidine 263 together coordinate thiamine diphosphate. Positions 263, 323, and 350 each coordinate substrate. Glutamate 371 and phenylalanine 397 together coordinate thiamine diphosphate. The active-site Proton donor is the glutamate 371. Substrate is bound by residues histidine 421 and aspartate 429. Glutamine 433 lines the thiamine diphosphate pocket. Residue arginine 479 participates in substrate binding.

This sequence belongs to the transketolase family. As to quaternary structure, homodimer. It depends on Mg(2+) as a cofactor. Requires Ca(2+) as cofactor. Mn(2+) serves as cofactor. The cofactor is Co(2+). Thiamine diphosphate is required as a cofactor.

The catalysed reaction is D-sedoheptulose 7-phosphate + D-glyceraldehyde 3-phosphate = aldehydo-D-ribose 5-phosphate + D-xylulose 5-phosphate. In terms of biological role, plays an essential role in total transketolase activity and cell proliferation in cancer cells; after transfection with anti-TKTL1 siRNA, total transketolase activity dramatically decreases and proliferation was significantly inhibited in cancer cells. Plays a pivotal role in carcinogenesis. This Mus musculus (Mouse) protein is Transketolase-like protein 2 (Tktl2).